A 581-amino-acid chain; its full sequence is Proline--tRNA ligase (581 aa).

Belongs to the class-II aminoacyl-tRNA synthetase family. ProS type 1 subfamily. In terms of assembly, homodimer.

Its subcellular location is the cytoplasm. It catalyses the reaction tRNA(Pro) + L-proline + ATP = L-prolyl-tRNA(Pro) + AMP + diphosphate. In terms of biological role, catalyzes the attachment of proline to tRNA(Pro) in a two-step reaction: proline is first activated by ATP to form Pro-AMP and then transferred to the acceptor end of tRNA(Pro). As ProRS can inadvertently accommodate and process non-cognate amino acids such as alanine and cysteine, to avoid such errors it has two additional distinct editing activities against alanine. One activity is designated as 'pretransfer' editing and involves the tRNA(Pro)-independent hydrolysis of activated Ala-AMP. The other activity is designated 'posttransfer' editing and involves deacylation of mischarged Ala-tRNA(Pro). The misacylated Cys-tRNA(Pro) is not edited by ProRS. The chain is Proline--tRNA ligase from Chlamydia trachomatis serovar A (strain ATCC VR-571B / DSM 19440 / HAR-13).